A 305-amino-acid polypeptide reads, in one-letter code: Type II restriction enzyme SsoII (305 aa).

It catalyses the reaction Endonucleolytic cleavage of DNA to give specific double-stranded fragments with terminal 5'-phosphates.. Functionally, a P subtype restriction enzyme that recognizes the double-stranded sequence 5'-CCNGG-3' and cleaves before C-1. The polypeptide is Type II restriction enzyme SsoII (ssoIIR) (Shigella sonnei).